A 396-amino-acid chain; its full sequence is Elongation factor Tu (396 aa).

Residues 10–206 (KPHVNVGTIG…ALDTYIPTPE (197 aa)) form the tr-type G domain. Positions 19–26 (GHVDHGKT) are G1. A GTP-binding site is contributed by 19–26 (GHVDHGKT). A Mg(2+)-binding site is contributed by T26. The G2 stretch occupies residues 60–64 (GITIN). Residues 81 to 84 (DCPG) form a G3 region. GTP-binding positions include 81–85 (DCPGH) and 136–139 (NKCD). The segment at 136–139 (NKCD) is G4. The interval 174-176 (SAK) is G5.

It belongs to the TRAFAC class translation factor GTPase superfamily. Classic translation factor GTPase family. EF-Tu/EF-1A subfamily. Monomer.

The protein localises to the cytoplasm. It catalyses the reaction GTP + H2O = GDP + phosphate + H(+). Its function is as follows. GTP hydrolase that promotes the GTP-dependent binding of aminoacyl-tRNA to the A-site of ribosomes during protein biosynthesis. The protein is Elongation factor Tu of Burkholderia mallei (strain NCTC 10247).